A 244-amino-acid polypeptide reads, in one-letter code: Phosphate propanoyltransferase (244 aa).

52 to 54 contacts CoA; the sequence is ISA. The Zn(2+) site is built by His-56 and His-58. Arg-106 lines the CoA pocket. Position 112 (Arg-112) interacts with phosphate. Residues Glu-118, His-166, His-168, and His-214 each coordinate Zn(2+). CoA is bound at residue Asn-221.

It belongs to the PduL family. As to quaternary structure, full-length protein forms large oligomers. Possible homotrimer and monomer, when purified in the absence of the encapsulation peptide (EP, residues 1-20). The EP may influence oligomerization. Requires Zn(2+) as cofactor.

It is found in the bacterial microcompartment. It catalyses the reaction propanoyl-CoA + phosphate = propanoyl phosphate + CoA. In terms of biological role, part of a bacterial microcompartment (BMC) locus required for growth on plant and algal sugars, including L-fucose and L-rhamnose. Thought to be active on lactyl-CoA in a lactaldehyde-degradation pathway. CoA is regenerated within the BMC via this enzyme, although there must also be cofactor transport across the BMC. Directly targeted to the BMC. This Planctopirus limnophila (strain ATCC 43296 / DSM 3776 / IFAM 1008 / Mu 290) (Planctomyces limnophilus) protein is Phosphate propanoyltransferase.